The following is a 73-amino-acid chain: Large ribosomal subunit protein bL31 (73 aa).

Positions 16, 18, 38, and 41 each coordinate Zn(2+).

It belongs to the bacterial ribosomal protein bL31 family. Type A subfamily. Part of the 50S ribosomal subunit. Requires Zn(2+) as cofactor.

Functionally, binds the 23S rRNA. This Vibrio vulnificus (strain YJ016) protein is Large ribosomal subunit protein bL31.